A 60-amino-acid polypeptide reads, in one-letter code: MATKVKFKYKGEEKEVDISKIKKVWRVGKMISFTYDDNGKTGRGAVSEKDAPKELLEKLK.

The interval 37–60 (DNGKTGRGAVSEKDAPKELLEKLK) is disordered. Residues 46–60 (VSEKDAPKELLEKLK) show a composition bias toward basic and acidic residues.

The protein belongs to the 7 kDa DNA-binding/endoribonuclease P2 family. In terms of assembly, monomer.

The protein localises to the cytoplasm. Functionally, can constrain negative DNA supercoils. May be involved in maintaining the integrity of the genome at high temperature. The sequence is that of DNA-binding protein 7c from Acidianus hospitalis (strain W1).